We begin with the raw amino-acid sequence, 659 residues long: 4-alpha-glucanotransferase (659 aa).

The active-site Nucleophile is the Glu123. Asp214 (proton donor) is an active-site residue.

Belongs to the glycosyl hydrolase 57 family. In terms of assembly, homodimer.

It catalyses the reaction Transfers a segment of a (1-&gt;4)-alpha-D-glucan to a new position in an acceptor, which may be glucose or a (1-&gt;4)-alpha-D-glucan.. Inhibited by p-chloromercuribenzoic acid, monoiodoacetic acid, mercury and nickel ions. Its function is as follows. Catalyzes the transglycosylation of maltooligosaccharides, yielding maltooligosaccharides of various lengths and glucose. Maltose and glucose can be used as acceptors in the transfer reaction. This is 4-alpha-glucanotransferase (jgt) from Thermococcus litoralis (strain ATCC 51850 / DSM 5473 / JCM 8560 / NS-C).